Consider the following 278-residue polypeptide: Large ribosomal subunit protein uL2 (278 aa).

Disordered regions lie at residues 1-58 and 225-278; these read MAIR…GGGH and VMNP…KNKR. Positions 37–58 are enriched in basic residues; the sequence is LHGRGGRNAHGRITTRHKGGGH. Residues 253-267 show a composition bias toward basic and acidic residues; the sequence is PEGRTRKNKASDKLI. Residues 268–278 are compositionally biased toward basic residues; the sequence is VRRRRTGKNKR.

This sequence belongs to the universal ribosomal protein uL2 family. As to quaternary structure, part of the 50S ribosomal subunit. Forms a bridge to the 30S subunit in the 70S ribosome.

In terms of biological role, one of the primary rRNA binding proteins. Required for association of the 30S and 50S subunits to form the 70S ribosome, for tRNA binding and peptide bond formation. It has been suggested to have peptidyltransferase activity; this is somewhat controversial. Makes several contacts with the 16S rRNA in the 70S ribosome. This chain is Large ribosomal subunit protein uL2, found in Rhodococcus opacus (strain B4).